Consider the following 153-residue polypeptide: MSATRRLQKELGDLKNCGVKAYENVECEETNLLKWTVLLIPDKEPYNKGAFKVGITFPVDYPFKPPKVAFETKIYHPNVDEEGKFCLPIVTAENWKPATKTEQVMMALLSLINEPEPSHPIRADVAEEFQKDHKKFMKTAEEHTRKHAEKRPE.

The UBC core domain occupies Ser-2–Glu-149. Catalysis depends on Cys-86, which acts as the Glycyl thioester intermediate.

This sequence belongs to the ubiquitin-conjugating enzyme family. In terms of assembly, interacts with E3 ubiquitin-protein ligase wwp-1. Interacts with RBR-type E3 ubiquitin transferase ari-1.1. As to expression, expressed in neurons localized in the head and tail of adults.

The catalysed reaction is S-ubiquitinyl-[E1 ubiquitin-activating enzyme]-L-cysteine + [E2 ubiquitin-conjugating enzyme]-L-cysteine = [E1 ubiquitin-activating enzyme]-L-cysteine + S-ubiquitinyl-[E2 ubiquitin-conjugating enzyme]-L-cysteine.. In terms of biological role, ubiquitin-conjugating enzyme E2. Accepts ubiquitin from the E1 complex and catalyzes its covalent attachment to other proteins. Required for diet restriction-mediated lifespan extension, probably acting as part of a complex with ubiquitin-protein ligase wwp-1. Acts redundantly with lin-35/Rb in the regulation of pharyngeal morphogenesis during embryonic development by negatively regulating the expression of proteins such as sup-35. This chain is Ubiquitin-conjugating enzyme E2 ubc-18, found in Caenorhabditis elegans.